Reading from the N-terminus, the 916-residue chain is RNA-directed DNA polymerase from mobile element jockey (916 aa).

In terms of domain architecture, Reverse transcriptase spans 483-757 (SILRVGYFPK…HEYKYLGVIL (275 aa)). The interval 890–916 (RSASPRSRVRRRLKRHHPQDLLDRALT) is disordered. Over residues 896–906 (SRVRRRLKRHH) the composition is skewed to basic residues. The span at 907 to 916 (PQDLLDRALT) shows a compositional bias: basic and acidic residues.

Mg(2+) is required as a cofactor. Mn(2+) serves as cofactor.

It catalyses the reaction DNA(n) + a 2'-deoxyribonucleoside 5'-triphosphate = DNA(n+1) + diphosphate. Inactivated by sulphydryl reagent. The polypeptide is RNA-directed DNA polymerase from mobile element jockey (jockey\pol) (Drosophila funebris (Fruit fly)).